A 284-amino-acid polypeptide reads, in one-letter code: Pantothenate synthetase (284 aa).

30-37 (MGNLHDGH) contacts ATP. Catalysis depends on histidine 37, which acts as the Proton donor. Glutamine 61 provides a ligand contact to (R)-pantoate. Position 61 (glutamine 61) interacts with beta-alanine. 149–152 (GEKD) serves as a coordination point for ATP. A (R)-pantoate-binding site is contributed by glutamine 155. Residues isoleucine 178 and 186–189 (LSSR) each bind ATP.

Belongs to the pantothenate synthetase family. In terms of assembly, homodimer.

It localises to the cytoplasm. It catalyses the reaction (R)-pantoate + beta-alanine + ATP = (R)-pantothenate + AMP + diphosphate + H(+). Its pathway is cofactor biosynthesis; (R)-pantothenate biosynthesis; (R)-pantothenate from (R)-pantoate and beta-alanine: step 1/1. In terms of biological role, catalyzes the condensation of pantoate with beta-alanine in an ATP-dependent reaction via a pantoyl-adenylate intermediate. This chain is Pantothenate synthetase, found in Salmonella typhi.